Reading from the N-terminus, the 349-residue chain is Histone-lysine N-methyltransferase ATXR6 (349 aa).

The segment at 1–28 (MVAVRRRRTQASNPRSEPPQHMSDHDSD) is disordered. The segment at 32-82 (DTVCEECSSGKQPAKLLLCDKCDKGFHLFCLRPILVSVPKGSWFCPSCSKH) adopts a PHD-type zinc-finger fold. Positions 92–99 (QTKIIDFF) match the PIP motif motif. The tract at residues 105–126 (PDSSQISSSSDSIGKKRKKTSL) is disordered. A compositionally biased stretch (low complexity) spans 106-116 (DSSQISSSSDS). Residue Met190 coordinates substrate. The region spanning 214–337 (PPLMVVFDPY…KGERLYYDYN (124 aa)) is the SET domain. S-adenosyl-L-methionine contacts are provided by residues 224 to 226 (EGF) and 287 to 291 (RFISG). Substrate-binding positions include Arg309 and 339-340 (YE). The S-adenosyl-L-methionine site is built by Tyr343 and Val349.

This sequence belongs to the class V-like SAM-binding methyltransferase superfamily. Histone-lysine methyltransferase family. TRX/MLL subfamily. As to quaternary structure, interacts with PCNA1 and PCNA2. Interacts (via PHD domain) with HTR1 (via N-terminus). Interacts with IPS1. As to expression, expressed in leaves, roots, stems, flowers and siliques. Up-regulated in tissues where cell division is active.

Its subcellular location is the nucleus. The catalysed reaction is L-lysyl(27)-[histone H3] + S-adenosyl-L-methionine = N(6)-methyl-L-lysyl(27)-[histone H3] + S-adenosyl-L-homocysteine + H(+). Histone methyltransferase that specifically monomethylates 'Lys-27' of histone H3 (H3K27me1). Has higher activity on nucleosomes containing H3.1 than H3.3. Involved in the formation of constitutive heterochromatin and the silencing of heterochromatic elements. May act as a positive regulator of the G1-S transition. Influences which sets of rRNA gene variants are expressed or silenced. Up-regulated by E2FB. The sequence is that of Histone-lysine N-methyltransferase ATXR6 (ATXR6) from Arabidopsis thaliana (Mouse-ear cress).